Consider the following 210-residue polypeptide: MRYPFWRLAVFLAACVAPVWWLYQAWIFALGPDPGKVLVEDFGLATLVMLLITMSMTPLQRLTGWPGWIVVRRQLGLWCFAYVVLHMTMYALFILGLDLGQLGVELVKRPYIIVGALAFLGLLALAVTSNRYSQRRLGARWKKLHRLIYVILGLGLLHMFWIVRADLKEWALYAGIGAFLLLLRIPMITRRIPRLGGSAGTGSKKVQNNG.

Helical transmembrane passes span 8-28 (LAVF…AWIF), 37-57 (VLVE…MSMT), 75-95 (LGLW…LFIL), 110-130 (PYII…VTSN), 147-167 (LIYV…RADL), and 169-189 (EWAL…PMIT).

The protein belongs to the MsrQ family. Heterodimer of a catalytic subunit (MsrP) and a heme-binding subunit (MsrQ). The cofactor is FMN. It depends on heme b as a cofactor.

The protein localises to the cell inner membrane. Part of the MsrPQ system that repairs oxidized periplasmic proteins containing methionine sulfoxide residues (Met-O), using respiratory chain electrons. Thus protects these proteins from oxidative-stress damage caused by reactive species of oxygen and chlorine generated by the host defense mechanisms. MsrPQ is essential for the maintenance of envelope integrity under bleach stress, rescuing a wide series of structurally unrelated periplasmic proteins from methionine oxidation. MsrQ provides electrons for reduction to the reductase catalytic subunit MsrP, using the quinone pool of the respiratory chain. The chain is Protein-methionine-sulfoxide reductase heme-binding subunit MsrQ from Pseudomonas savastanoi pv. phaseolicola (strain 1448A / Race 6) (Pseudomonas syringae pv. phaseolicola (strain 1448A / Race 6)).